We begin with the raw amino-acid sequence, 319 residues long: MamJ paralog LimJ (319 aa).

Disordered stretches follow at residues 1–59 (MMME…PAPV) and 145–176 (AAAPEPEPEPVPEPEPEPEPEAAHDHAATETE). Residues 30–52 (AALAPAADAEIPASSAPEPAAPI) are compositionally biased toward low complexity. The segment covering 150-164 (PEPEPVPEPEPEPEP) has biased composition (acidic residues).

It belongs to the magnetosome MamJ protein family.

Its subcellular location is the magnetosome. Functionally, regulates the dynamic behavior of MamK filaments; paralog MamJ also promotes MamK turnover. At least one other protein besides MamJ and LimJ is required for MamK turnover. Might connect magnetosomes to MamK filaments. The protein is MamJ paralog LimJ of Paramagnetospirillum magneticum (strain ATCC 700264 / AMB-1) (Magnetospirillum magneticum).